We begin with the raw amino-acid sequence, 365 residues long: Phospho-N-acetylmuramoyl-pentapeptide-transferase (365 aa).

The next 9 membrane-spanning stretches (helical) occupy residues 47–67 (LLAL…VVPL), 92–112 (PTMG…ILAG), 114–134 (SPLV…GWLD), 153–173 (LCLQ…QQGW), 180–200 (ITLP…LAVF), 215–235 (LDGL…LWLA), 239–259 (PAIA…LLHN), 281–301 (AIAI…LFVL), and 344–364 (TQVV…CWLL).

The protein belongs to the glycosyltransferase 4 family. MraY subfamily. Requires Mg(2+) as cofactor.

The protein localises to the cell inner membrane. It catalyses the reaction UDP-N-acetyl-alpha-D-muramoyl-L-alanyl-gamma-D-glutamyl-meso-2,6-diaminopimeloyl-D-alanyl-D-alanine + di-trans,octa-cis-undecaprenyl phosphate = di-trans,octa-cis-undecaprenyl diphospho-N-acetyl-alpha-D-muramoyl-L-alanyl-D-glutamyl-meso-2,6-diaminopimeloyl-D-alanyl-D-alanine + UMP. It participates in cell wall biogenesis; peptidoglycan biosynthesis. Its function is as follows. Catalyzes the initial step of the lipid cycle reactions in the biosynthesis of the cell wall peptidoglycan: transfers peptidoglycan precursor phospho-MurNAc-pentapeptide from UDP-MurNAc-pentapeptide onto the lipid carrier undecaprenyl phosphate, yielding undecaprenyl-pyrophosphoryl-MurNAc-pentapeptide, known as lipid I. The polypeptide is Phospho-N-acetylmuramoyl-pentapeptide-transferase (Synechococcus elongatus (strain ATCC 33912 / PCC 7942 / FACHB-805) (Anacystis nidulans R2)).